The chain runs to 261 residues: MWDPDVYLAFSGHRNRPFYELVSRVGLERARRVVDLGCGPGHLTRYLARRWPGAVIEALDSSPEMVAAAAERGIDATTGDLRDWKPKPDTDVVVSNAALHWVPEHSDLLVRWVDELAPGSWIAVQIPGNFETPSHAAVRALARREPYAKLMRDIPFRVGAVVQSPAYYAELLMDTGCKVDVWETTYLHQLTGEHPVLDWITGSALVPVRERLSDESWQQFRQELIPLLNDAYPPRADGSTIFPFRRLFMVAEVGGARRSGG.

This sequence belongs to the methyltransferase superfamily. Tam family.

Its subcellular location is the cytoplasm. It carries out the reaction trans-aconitate + S-adenosyl-L-methionine = (E)-3-(methoxycarbonyl)pent-2-enedioate + S-adenosyl-L-homocysteine. Functionally, catalyzes the S-adenosylmethionine monomethyl esterification of trans-aconitate. The chain is Probable trans-aconitate 2-methyltransferase from Mycobacterium bovis (strain ATCC BAA-935 / AF2122/97).